Here is a 257-residue protein sequence, read N- to C-terminus: Snake venom serine protease BITS01A (257 aa).

An N-terminal signal peptide occupies residues 1 to 18 (MVLIRVIANLLILQVSYA). A propeptide spanning residues 19 to 24 (QKSSEL) is cleaved from the precursor. The Peptidase S1 domain maps to 25-248 (VVGGDECDIN…YLPWIQSIIA (224 aa)). 6 disulfide bridges follow: cysteine 31–cysteine 162, cysteine 49–cysteine 65, cysteine 97–cysteine 255, cysteine 141–cysteine 209, cysteine 173–cysteine 188, and cysteine 199–cysteine 224. The active-site Charge relay system is histidine 64. An N-linked (GlcNAc...) asparagine glycan is attached at asparagine 101. The active-site Charge relay system is the aspartate 109. Asparagine 121, asparagine 153, and asparagine 169 each carry an N-linked (GlcNAc...) asparagine glycan. Serine 203 (charge relay system) is an active-site residue. N-linked (GlcNAc...) asparagine glycosylation is found at asparagine 210 and asparagine 250.

Belongs to the peptidase S1 family. Snake venom subfamily. In terms of assembly, monomer. In terms of tissue distribution, expressed by the venom gland.

The protein resides in the secreted. In terms of biological role, snake venom serine protease that may act in the hemostasis system of the prey. The polypeptide is Snake venom serine protease BITS01A (Bothrops insularis (Golden lancehead)).